The chain runs to 717 residues: Mitochondrial potassium channel ATP-binding subunit (717 aa).

A mitochondrion-targeting transit peptide spans 1 to 25 (MLVHLFRFGIRGGPVPGWSLQSLRF). The next 4 helical transmembrane spans lie at 127 to 147 (LLALGAAIVLALGAALVNVQI), 178 to 198 (VQLLLLYGVQGLLTFGYLVLL), 278 to 298 (LMLAVVTPALMGVGTLMGSGL), and 365 to 385 (NIAFNCMVLGTLFIGGSLVAG). Residues 132–419 (AAIVLALGAA…LSVLFGQVVR (288 aa)) form the ABC transmembrane type-1 domain. The ABC transporter domain occupies 454 to 691 (ITFQNVTFSY…GGLYSELIRR (238 aa)). 489–496 (GQSGGGKT) serves as a coordination point for ATP. The disordered stretch occupies residues 695-717 (DASLTSTPPAEKPEDPKSCQSKA).

This sequence belongs to the ABC transporter superfamily. ABCB family. Multidrug resistance exporter (TC 3.A.1.201) subfamily. The mitochondrial potassium channel (mitoK(ATP)) is composed of 4 subunits of CCDC51/MITOK and 4 subunits of ABCB8/MITOSUR. Interacts with PAAT. Interacts with NRP1; NRP1 regulates ABCB8/MITOSUR protein levels in mitochondria.

The protein localises to the mitochondrion inner membrane. Channel activity inhibited by ATP via ABCB8/MITOSUR subunit. ATP-binding subunit of the mitochondrial ATP-gated potassium channel (mitoK(ATP)). Together with pore-forming subunit CCDC51/MITOK of the mitoK(ATP) channel, mediates ATP-dependent potassium currents across the mitochondrial inner membrane. An increase in ATP intracellular levels closes the channel, inhibiting K(+) transport, whereas a decrease in ATP levels enhances K(+) uptake in the mitochondrial matrix. Plays a role in mitochondrial iron transport. Required for maintenance of normal cardiac function, possibly by influencing mitochondrial iron export and regulating the maturation of cytosolic iron sulfur cluster-containing enzymes. In Mus musculus (Mouse), this protein is Mitochondrial potassium channel ATP-binding subunit.